We begin with the raw amino-acid sequence, 715 residues long: Transcription factor MST12 (715 aa).

Low complexity predominate over residues 214 to 224; it reads SSSFNAQQVSF. Disordered regions lie at residues 214–243, 439–469, and 518–539; these read SSSF…MPPP, AAHR…NSPP, and PMPS…AQGG. C2H2-type zinc fingers lie at residues 564 to 588 and 594 to 616; these read HSCP…VRTH and YICP…KRTH. The segment at 632-691 is disordered; it reads EEEYSGDDHLGSLEEASPTSEGGYVTSSLNSAMAHSNTSQHPGSNAVSPNPGPMSHAPTY. A compositionally biased stretch (polar residues) spans 648-679; sequence SPTSEGGYVTSSLNSAMAHSNTSQHPGSNAVS.

It belongs to the STE12 transcription factor family.

The protein localises to the nucleus. Its function is as follows. Transcription factor that may function downstream of PMK1 to regulate genes involved in infectious hyphae growth. Is not essential for vegetative growth, conidiation or appressorium formation. May be involved in the regulation of the expression of the cell surface sensor MSB2. This is Transcription factor MST12 from Pyricularia oryzae (strain 70-15 / ATCC MYA-4617 / FGSC 8958) (Rice blast fungus).